The chain runs to 485 residues: MASISDIHQQLISKQRSAVEITQEALENINQLEPKLKSFICVTAEKAIAQARQVDAKIAAGEKIGLLTGIPIAVKDNICTRGIPTTCGSKILQNFIPPYESTVTQKLVDAGAIILGKTNLDEFGMGSSTENSAYQVTTNPWDNTRVPGGSSGGSAAAVASAESVVALGSDTGGSIRQPASFCGVVGIKPTYGLVSRYGLVAYASSMDQIGPLSRTVKDSAILLQAIAGYDPKDSTSLNVPVPDYTKNLTPNLRPKGQIRIGLIQETFGDGLDSSVLQAFTKAVELMQELGAEIQVISCPRFSYGLPTYYVIAPSEASANLARYDGVKYGFRASESENLLNMYAKTRSEGFGSEVKRRIMIGTYALSAGYYDAYYLKAQKVRTLIKEDFDKAFAKVDILACPTSPTTAFKLGEKSDNPLSMYLSDLMTIPVNLAGLPALSLPCGFDQQGLPIGMQLISNVLKEDLLFEAAYVYEQANNWYKFQPQL.

Active-site charge relay system residues include Lys-75 and Ser-150. The active-site Acyl-ester intermediate is the Ser-174.

It belongs to the amidase family. GatA subfamily. Heterotrimer of A, B and C subunits.

The enzyme catalyses L-glutamyl-tRNA(Gln) + L-glutamine + ATP + H2O = L-glutaminyl-tRNA(Gln) + L-glutamate + ADP + phosphate + H(+). Functionally, allows the formation of correctly charged Gln-tRNA(Gln) through the transamidation of misacylated Glu-tRNA(Gln) in organisms which lack glutaminyl-tRNA synthetase. The reaction takes place in the presence of glutamine and ATP through an activated gamma-phospho-Glu-tRNA(Gln). This is Glutamyl-tRNA(Gln) amidotransferase subunit A from Trichodesmium erythraeum (strain IMS101).